We begin with the raw amino-acid sequence, 216 residues long: MQKGILGKKLGMTQIFAPDGKIIPVTVVEAGPCVVVQKKTTATDGYNAVQLGFGEIRETLVNKPLKGHFEKHQVKATRYLREFRLDDVESLNVGDVIKADIFAEGELVDVTGISRGKGFAGGVKRWNFNRGPSSHGSKYHRRPGSLGQRRWARVPKGRKLPGRLGGERVTVLGLRVVKVDPEKNLILIKGAVPGAKGSLITIRDSVKAARAKAKAQ.

This sequence belongs to the universal ribosomal protein uL3 family. Part of the 50S ribosomal subunit. Forms a cluster with proteins L14 and L19.

Its function is as follows. One of the primary rRNA binding proteins, it binds directly near the 3'-end of the 23S rRNA, where it nucleates assembly of the 50S subunit. The polypeptide is Large ribosomal subunit protein uL3 (Symbiobacterium thermophilum (strain DSM 24528 / JCM 14929 / IAM 14863 / T)).